A 184-amino-acid chain; its full sequence is Photosystem I assembly protein Ycf4 (184 aa).

2 helical membrane-spanning segments follow: residues 22-42 and 57-77; these read FCWAFILFLGSLGFLLVGTSS and IIFFPQGIVMSFYGIAGLFIS.

This sequence belongs to the Ycf4 family.

It is found in the plastid. The protein resides in the chloroplast thylakoid membrane. In terms of biological role, seems to be required for the assembly of the photosystem I complex. This is Photosystem I assembly protein Ycf4 from Crucihimalaya wallichii (Rock-cress).